We begin with the raw amino-acid sequence, 505 residues long: 2,3-bisphosphoglycerate-independent phosphoglycerate mutase (505 aa).

The Mn(2+) site is built by aspartate 13 and serine 63. Serine 63 acts as the Phosphoserine intermediate in catalysis. Residues histidine 124, arginine 153–aspartate 154, arginine 183, arginine 189, arginine 254–arginine 257, and lysine 330 contribute to the substrate site. Residues aspartate 396, histidine 400, aspartate 437, histidine 438, and histidine 456 each coordinate Mn(2+).

The protein belongs to the BPG-independent phosphoglycerate mutase family. In terms of assembly, monomer. Requires Mn(2+) as cofactor.

It carries out the reaction (2R)-2-phosphoglycerate = (2R)-3-phosphoglycerate. It functions in the pathway carbohydrate degradation; glycolysis; pyruvate from D-glyceraldehyde 3-phosphate: step 3/5. Functionally, catalyzes the interconversion of 2-phosphoglycerate and 3-phosphoglycerate. The protein is 2,3-bisphosphoglycerate-independent phosphoglycerate mutase of Dinoroseobacter shibae (strain DSM 16493 / NCIMB 14021 / DFL 12).